Here is a 287-residue protein sequence, read N- to C-terminus: Bifunctional protein FolD (287 aa).

Residues 165–167 (GRS), Ser-190, and Ile-231 contribute to the NADP(+) site.

This sequence belongs to the tetrahydrofolate dehydrogenase/cyclohydrolase family. In terms of assembly, homodimer.

It carries out the reaction (6R)-5,10-methylene-5,6,7,8-tetrahydrofolate + NADP(+) = (6R)-5,10-methenyltetrahydrofolate + NADPH. The catalysed reaction is (6R)-5,10-methenyltetrahydrofolate + H2O = (6R)-10-formyltetrahydrofolate + H(+). It functions in the pathway one-carbon metabolism; tetrahydrofolate interconversion. Catalyzes the oxidation of 5,10-methylenetetrahydrofolate to 5,10-methenyltetrahydrofolate and then the hydrolysis of 5,10-methenyltetrahydrofolate to 10-formyltetrahydrofolate. This chain is Bifunctional protein FolD, found in Carboxydothermus hydrogenoformans (strain ATCC BAA-161 / DSM 6008 / Z-2901).